The primary structure comprises 183 residues: Ferredoxin-2, mitochondrial (183 aa).

The N-terminal 52 residues, 1 to 52, are a transit peptide targeting the mitochondrion; the sequence is MAASVAWGGVNAGFLLRAARGAWWSRPGGFWGSGEAAAPAIARKFRATGSRP. In terms of domain architecture, 2Fe-2S ferredoxin-type spans 68-170; the sequence is VNVVFVDRSG…GAEFTLPKIT (103 aa). [2Fe-2S] cluster contacts are provided by cysteine 105, cysteine 111, cysteine 114, and cysteine 151.

The protein belongs to the adrenodoxin/putidaredoxin family. Component of the mitochondrial core iron-sulfur cluster (ISC) complex composed of NFS1, LYRM4, NDUFAB1, ISCU, FXN, and FDX2; this complex is a heterohexamer containing two copies of each monomer. Form a heterodimer complex with NFS1. Interacts (in both their reduced and oxidized states) with the cysteine desulfurase (NFS1:LYRM4) complex; this interaction stimulates cysteine desulfurase activity, and serves as a reductant for Fe-S cluster assembly. Requires [2Fe-2S] cluster as cofactor.

The protein resides in the mitochondrion. It is found in the mitochondrion matrix. In terms of biological role, electron donor, of the core iron-sulfur cluster (ISC) assembly complex, that acts to reduce the persulfide into sulfide during [2Fe-2S] clusters assembly on the scaffolding protein ISCU. The core iron-sulfur cluster (ISC) assembly complex is involved in the de novo synthesis of a [2Fe-2S] cluster, the first step of the mitochondrial iron-sulfur protein biogenesis. This process is initiated by the cysteine desulfurase complex (NFS1:LYRM4:NDUFAB1) that produces persulfide which is delivered on the scaffold protein ISCU in a FXN-dependent manner. Then this complex is stabilized by FDX2 which provides reducing equivalents to accomplish the [2Fe-2S] cluster assembly. Finally, the [2Fe-2S] cluster is transferred from ISCU to chaperone proteins, including HSCB, HSPA9 and GLRX5. Essential for coenzyme Q biosynthesis: together with FDXR, transfers the electrons required for the hydroxylation reaction performed by COQ6. The sequence is that of Ferredoxin-2, mitochondrial from Bos taurus (Bovine).